A 158-amino-acid polypeptide reads, in one-letter code: SsrA-binding protein (158 aa).

It belongs to the SmpB family.

The protein localises to the cytoplasm. Its function is as follows. Required for rescue of stalled ribosomes mediated by trans-translation. Binds to transfer-messenger RNA (tmRNA), required for stable association of tmRNA with ribosomes. tmRNA and SmpB together mimic tRNA shape, replacing the anticodon stem-loop with SmpB. tmRNA is encoded by the ssrA gene; the 2 termini fold to resemble tRNA(Ala) and it encodes a 'tag peptide', a short internal open reading frame. During trans-translation Ala-aminoacylated tmRNA acts like a tRNA, entering the A-site of stalled ribosomes, displacing the stalled mRNA. The ribosome then switches to translate the ORF on the tmRNA; the nascent peptide is terminated with the 'tag peptide' encoded by the tmRNA and targeted for degradation. The ribosome is freed to recommence translation, which seems to be the essential function of trans-translation. The sequence is that of SsrA-binding protein from Bartonella henselae (strain ATCC 49882 / DSM 28221 / CCUG 30454 / Houston 1) (Rochalimaea henselae).